The following is a 451-amino-acid chain: Lipase member H (451 aa).

Residues 1 to 16 (MLRLCFFISFMCLVKS) form the signal peptide. The N-linked (GlcNAc...) asparagine glycan is linked to Asn-66. Residue Ser-154 is the Nucleophile of the active site. Asp-178 serves as the catalytic Charge relay system. Residues Cys-233 and Cys-246 are joined by a disulfide bond. His-248 serves as the catalytic Charge relay system. 3 disulfide bridges follow: Cys-270-Cys-281, Cys-284-Cys-292, and Cys-427-Cys-446.

It belongs to the AB hydrolase superfamily. Lipase family. As to quaternary structure, interacts with TTMP/C3orf52. In terms of tissue distribution, expressed in placenta and colon. Weakly expressed in small intestine.

The protein resides in the secreted. It localises to the cell membrane. It catalyses the reaction 1-hexadecanoyl-2-(9Z-octadecenoyl)-sn-glycero-3-phosphate + H2O = 2-(9Z-octadecenoyl)-sn-glycero-3-phosphate + hexadecanoate + H(+). Functionally, hydrolyzes specifically phosphatidic acid (PA) to produce 2-acyl lysophosphatidic acid (LPA; a potent bioactive lipid mediator) and fatty acid. Does not hydrolyze other phospholipids, like phosphatidylserine (PS), phosphatidylcholine (PC) and phosphatidylethanolamine (PE) or triacylglycerol (TG). This chain is Lipase member H (Liph), found in Mus musculus (Mouse).